A 417-amino-acid polypeptide reads, in one-letter code: Cotranscriptional regulator ARB2A (417 aa).

A signal peptide spans 1–18; that stretch reads MSISLSSLIFLPIWINMA. An N-linked (GlcNAc...) asparagine glycan is attached at Asn-26. Positions 208-248 are disordered; the sequence is KQKMHKQSSSSDGTDEPAGKRERRDKVSKETKKRRDFYEKY. The span at 224–237 shows a compositional bias: basic and acidic residues; that stretch reads PAGKRERRDKVSKE. Residue Ser-294 is the Nucleophile of the active site. Positions 398-417 are disordered; the sequence is SSSQKPALTRRSHRIKHEEL. Over residues 405-417 the composition is skewed to basic residues; the sequence is LTRRSHRIKHEEL. Positions 414–417 match the Prevents secretion from ER motif; the sequence is HEEL.

Belongs to the ARB2A family. Interacts with AGO2. Found in a complex, composed of AGO2, CHD7 and ARB2A.

It localises to the nucleus. Its subcellular location is the cytoplasm. It is found in the endoplasmic reticulum. In terms of biological role, plays a role in the regulation of alternative splicing, by interacting with AGO2 and CHD7. Seems to be required for stabilizing protein-protein interactions at the chromatin-spliceosome interface. May have hydrolase activity. The polypeptide is Cotranscriptional regulator ARB2A (Arb2a) (Mus musculus (Mouse)).